Here is a 293-residue protein sequence, read N- to C-terminus: Zinc metalloproteinase nas-2 (293 aa).

The first 17 residues, 1-17, serve as a signal peptide directing secretion; the sequence is MIFPLLLTLILPNFVAP. Residues 18 to 67 constitute a propeptide that is removed on maturation; that stretch reads KVLEPEKDDEIAVSTQREKTFFDMKLILTKLPTFEPSKYGHINIPLRKKR. Residues 67 to 260 enclose the Peptidase M12A domain; that stretch reads RGIALHPLQW…ININTFYKCK (194 aa). The N-linked (GlcNAc...) asparagine glycan is linked to Asn111. Intrachain disulfides connect Cys114-Cys259 and Cys139-Cys169. His180 serves as a coordination point for Zn(2+). Glu181 is a catalytic residue. Zn(2+) contacts are provided by His184 and His190. N-linked (GlcNAc...) asparagine glycosylation is present at Asn287.

Zn(2+) is required as a cofactor.

Its subcellular location is the secreted. Its function is as follows. Metalloprotease. The chain is Zinc metalloproteinase nas-2 (nas-2) from Caenorhabditis elegans.